The primary structure comprises 75 residues: uncharacterized protein (75 aa).

It is found in the plastid. The protein localises to the chloroplast. This is an uncharacterized protein from Calycanthus floridus var. glaucus (Eastern sweetshrub).